Consider the following 202-residue polypeptide: Ras-related protein RABD2b (202 aa).

Residues 15–23 (GDSGVGKSC), 33–40 (YLDSYIST), 63–67 (DTAGQ), 121–124 (NKND), and 151–153 (SAK) contribute to the GTP site. The Effector region signature appears at 37–45 (YISTIGVDF). The tract at residues 174 to 202 (ASQPAGGAKPPTVQIRGQPVNQQSGCCSS) is disordered. Residues 192–202 (PVNQQSGCCSS) show a composition bias toward polar residues. S-geranylgeranyl cysteine attachment occurs at residues cysteine 199 and cysteine 200.

It belongs to the small GTPase superfamily. Rab family.

It localises to the golgi apparatus. The protein resides in the trans-Golgi network membrane. Its subcellular location is the golgi apparatus membrane. In terms of biological role, protein transport. Regulator of membrane traffic from the Golgi apparatus towards the endoplasmic reticulum (ER). This Arabidopsis thaliana (Mouse-ear cress) protein is Ras-related protein RABD2b (RABD2B).